Consider the following 333-residue polypeptide: uncharacterized protein (333 aa).

An N-terminal signal peptide occupies residues 1-23 (MSRSFMIILTIMLIALSLGEVLA). The helical transmembrane segment at 232-252 (SFFLGVLVTLMILSPVIVYLW) threads the bilayer.

The protein resides in the membrane. This is an uncharacterized protein from Pyrococcus abyssi (strain GE5 / Orsay).